A 393-amino-acid polypeptide reads, in one-letter code: MLFQVGGEGTRPTFFEMAAAQQLPASLRAALTYSLGVFALRRSFLHKILDYEDEFFAALMLILEGHSLRTTDGSFAESLYGLRRKSARLRLRKDSARKDSSEEVQHSGLEKRQRILSVVFLVVLPYFKSKLHAIYNKEREARLRESLWGAEDQGFDEADFFTGDDSIVSREPSGNEELSVRVQLATKIKKFIAVCYPWIHASSEGLSFTYQLLYLLDATGFYSLGLQALGIQVCRATGQELMDTSSRISKIRNHERERLRGPPWLKTVQGALLSCSYAVLDYAQTGLIAAVFIFKMMEWWYQSAEERLSAPTVYPPPPPPPAPKMAKEGIPLPPDRSLCALCLQKRANPSVVTVSGFVFCYSCVFKYVSKYKRCPVTLIPASVDQIRRLFQDT.

Residues 1–13 (MLFQVGGEGTRPT) lie on the Peroxisomal matrix side of the membrane. Residues 14–41 (FFEMAAAQQLPASLRAALTYSLGVFALR) traverse the membrane as a helical segment. Topologically, residues 42 to 44 (RSF) are cytoplasmic. A helical membrane pass occupies residues 45–69 (LHKILDYEDEFFAALMLILEGHSLR). At 70-110 (TTDGSFAESLYGLRRKSARLRLRKDSARKDSSEEVQHSGLE) the chain is on the peroxisomal matrix side. A helical membrane pass occupies residues 111–148 (KRQRILSVVFLVVLPYFKSKLHAIYNKEREARLRESLW). Topologically, residues 149 to 168 (GAEDQGFDEADFFTGDDSIV) are cytoplasmic. A helical transmembrane segment spans residues 169–214 (SREPSGNEELSVRVQLATKIKKFIAVCYPWIHASSEGLSFTYQLLY). Topologically, residues 215–285 (LLDATGFYSL…SYAVLDYAQT (71 aa)) are peroxisomal matrix. A helical membrane pass occupies residues 286 to 312 (GLIAAVFIFKMMEWWYQSAEERLSAPT). Residues 313-393 (VYPPPPPPPA…DQIRRLFQDT (81 aa)) are Cytoplasmic-facing. 4 residues coordinate Zn(2+): Cys-339, Cys-342, Cys-360, and Cys-363. The RING-type; degenerate zinc finger occupies 339-378 (CALCLQKRANPSVVTVSGFVFCYSCVFKYVSKYKRCPVTL).

This sequence belongs to the pex2/pex10/pex12 family. In terms of assembly, component of the PEX2-PEX10-PEX12 retrotranslocation channel. Interacts (via C-terminus) with PEX7. Interacts with DSK2a and DSK2b. In terms of tissue distribution, expressed in young seedlings, roots, leaves, seeds and flowers.

The protein resides in the peroxisome membrane. It functions in the pathway protein modification; protein ubiquitination. Its function is as follows. Component of a retrotranslocation channel required for peroxisome organization by mediating export of the PEX5 receptor from peroxisomes to the cytosol, thereby promoting PEX5 recycling. The retrotranslocation channel is composed of PEX2, PEX10 and PEX12; each subunit contributing transmembrane segments that coassemble into an open channel that specifically allows the passage of PEX5 through the peroxisomal membrane. PEX12 also regulates PEX5 recycling by activating the E3 ubiquitin-protein ligase activity of PEX10. When PEX5 recycling is compromised, PEX12 stimulates PEX10-mediated polyubiquitination of PEX5, leading to its subsequent degradation. This is Peroxisome biogenesis protein 12 (PEX12) from Arabidopsis thaliana (Mouse-ear cress).